The sequence spans 724 residues: 1,3-beta-galactosyl-N-acetylhexosamine phosphorylase Cphy3030 (724 aa).

The Proton donor role is filled by Asp-316.

This sequence belongs to the glycoside hydrolase 112 family.

The enzyme catalyses beta-D-galactosyl-(1-&gt;3)-N-acetyl-D-glucosamine + phosphate = alpha-D-galactose 1-phosphate + N-acetyl-D-glucosamine. Its function is as follows. Reversibly phosphorolyzes beta-D-galactopyranosyl-(1-&gt;3)-N-acetyl-D-glucosamine to form alpha-D-galactopyranose 1-phosphate and acetyl-D-glucosamine. Active towards galacto-N-biose and lacto-N-biose. Does not phosphorolyze galacto-N-tetraose or lacto-N-tetraose. In the reverse reaction has activity toward N-acetyl-D-glucosamine and N-acetyl-D-galactosamine, but not L-rhamnose, D-glucose or D-galactose. This Lachnoclostridium phytofermentans (strain ATCC 700394 / DSM 18823 / ISDg) (Clostridium phytofermentans) protein is 1,3-beta-galactosyl-N-acetylhexosamine phosphorylase Cphy3030.